A 472-amino-acid polypeptide reads, in one-letter code: Methylenetetrahydrofolate--tRNA-(uracil-5-)-methyltransferase TrmFO (472 aa).

Residue 15 to 20 (GGGLAG) coordinates FAD.

It belongs to the MnmG family. TrmFO subfamily. It depends on FAD as a cofactor.

It localises to the cytoplasm. The enzyme catalyses uridine(54) in tRNA + (6R)-5,10-methylene-5,6,7,8-tetrahydrofolate + NADH + H(+) = 5-methyluridine(54) in tRNA + (6S)-5,6,7,8-tetrahydrofolate + NAD(+). The catalysed reaction is uridine(54) in tRNA + (6R)-5,10-methylene-5,6,7,8-tetrahydrofolate + NADPH + H(+) = 5-methyluridine(54) in tRNA + (6S)-5,6,7,8-tetrahydrofolate + NADP(+). Its function is as follows. Catalyzes the folate-dependent formation of 5-methyl-uridine at position 54 (M-5-U54) in all tRNAs. This chain is Methylenetetrahydrofolate--tRNA-(uracil-5-)-methyltransferase TrmFO, found in Rhizobium meliloti (strain 1021) (Ensifer meliloti).